Here is a 485-residue protein sequence, read N- to C-terminus: Glutamyl-tRNA(Gln) amidotransferase subunit A (485 aa).

Residues K82 and S157 each act as charge relay system in the active site. The Acyl-ester intermediate role is filled by S181.

The protein belongs to the amidase family. GatA subfamily. Heterotrimer of A, B and C subunits.

The enzyme catalyses L-glutamyl-tRNA(Gln) + L-glutamine + ATP + H2O = L-glutaminyl-tRNA(Gln) + L-glutamate + ADP + phosphate + H(+). Functionally, allows the formation of correctly charged Gln-tRNA(Gln) through the transamidation of misacylated Glu-tRNA(Gln) in organisms which lack glutaminyl-tRNA synthetase. The reaction takes place in the presence of glutamine and ATP through an activated gamma-phospho-Glu-tRNA(Gln). The chain is Glutamyl-tRNA(Gln) amidotransferase subunit A from Treponema denticola (strain ATCC 35405 / DSM 14222 / CIP 103919 / JCM 8153 / KCTC 15104).